A 301-amino-acid polypeptide reads, in one-letter code: MPGIKEIRTKIKSVQNTRKITKAMEMVAASKMRKAQERMRAGRPYATKVREIAAHLMQANPEYGHPYLVEREVKAVGVVLVTTDKGLCGGLNTNISRVTLSKLKEFEQRSIKVQATAFGNKGLGLLTRIGAKLVSQEVQLGDKPDLDRLLGAIKVQLDDYLEGRIDALYVATTRFVNTMRQEPVFLRLLPLSNGLDDPFQSGVETLAKTAEIKSDYSWDYIYEPDAKSVIDDLLQRYVEGLLYQAVAENMASEQSARMVAMKSASDNAKKVIGDLQLVYNKTRQAAITKEISEIVGGAAAV.

It belongs to the ATPase gamma chain family. As to quaternary structure, F-type ATPases have 2 components, CF(1) - the catalytic core - and CF(0) - the membrane proton channel. CF(1) has five subunits: alpha(3), beta(3), gamma(1), delta(1), epsilon(1). CF(0) has three main subunits: a, b and c.

The protein localises to the cell inner membrane. Its function is as follows. Produces ATP from ADP in the presence of a proton gradient across the membrane. The gamma chain is believed to be important in regulating ATPase activity and the flow of protons through the CF(0) complex. The chain is ATP synthase gamma chain from Bordetella parapertussis (strain 12822 / ATCC BAA-587 / NCTC 13253).